Consider the following 1448-residue polypeptide: Gag-Pol polyprotein (1448 aa).

The N-myristoyl glycine; by host moiety is linked to residue Gly2. The Nuclear export signal motif lies at 16–22; the sequence is LEKIRLR. The Nuclear localization signal signature appears at 26–32; that stretch reads KKKYMLK. 2 disordered regions span residues 114–133 and 217–239; these read TAETMPKTSRPTAPSSGRGG and QHPQPAPQQGQLREPSGSDIAGT. The span at 119–128 shows a compositional bias: polar residues; the sequence is PKTSRPTAPS. 2 CCHC-type zinc fingers span residues 391–408 and 412–429; these read IKCWNCGKEGHSARQCRA and QGCWKCGKMDHVMAKCPD. The segment at 443–464 is disordered; that stretch reads EAPQFPHGSSASGADANCSPRG. The Peptidase A2 domain maps to 517–586; the sequence is VEVLLDTGAD…TPINIFGRNL (70 aa). Asp522 functions as the For protease activity; shared with dimeric partner in the catalytic mechanism. Residues 640–830 form the Reverse transcriptase domain; it reads DGQLEEAPPT…PPFQWMGYEL (191 aa). Mg(2+)-binding residues include Asp706, Asp781, and Asp782. The segment at 823 to 831 is RT 'primer grip'; it reads FQWMGYELW. A Tryptophan repeat motif motif is present at residues 993-1009; the sequence is WEQWWTDYWQVTWIPEW. Residues 1029–1152 form the RNase H type-1 domain; sequence IEGEETYYTD…IDHLVSQGIR (124 aa). Mg(2+) contacts are provided by Asp1038 and Glu1073. An Integrase-type zinc finger spans residues 1158–1199; the sequence is EKIEPAQEEHDKYHSNVKELVFKFGLPRIVARQIVDTCDKCH. Zn(2+) is bound by residues His1167, His1171, Cys1195, and Cys1198. The 151-residue stretch at 1209-1359 folds into the Integrase catalytic domain; sequence VNSDLGTWQM…TPAERLINMI (151 aa). Asp1219 provides a ligand contact to Mg(2+). A DNA-binding region (integrase-type) is located at residues 1378-1425; the sequence is FRVYYREGRDQLWKGPGELLWKGEGAVILKVGTDIKVVPRRKAKIIKD. The interval 1426-1448 is disordered; the sequence is YGGGKEVDSSSHMEDTGEAREVA.

In terms of assembly, homotrimer. Interacts with gp41 (via C-terminus). As to quaternary structure, homodimer. The active site consists of two apposed aspartic acid residues. Heterodimer of p66 RT and p51 RT (RT p66/p51). Heterodimerization of RT is essential for DNA polymerase activity. Despite the sequence identities, p66 RT and p51 RT have distinct folding. In terms of assembly, homotetramer; may further associate as a homohexadecamer. The cofactor is Mg(2+). Post-translationally, specific enzymatic cleavages by the viral protease yield mature proteins. The protease is released by autocatalytic cleavage. The polyprotein is cleaved during and after budding, this process is termed maturation. Proteolytic cleavage of p66 RT removes the RNase H domain to yield the p51 RT subunit. Capsid protein p24 is phosphorylated.

It localises to the virion. The protein resides in the host nucleus. It is found in the host cytoplasm. Its subcellular location is the host cell membrane. It catalyses the reaction Specific for a P1 residue that is hydrophobic, and P1' variable, but often Pro.. The enzyme catalyses Endohydrolysis of RNA in RNA/DNA hybrids. Three different cleavage modes: 1. sequence-specific internal cleavage of RNA. Human immunodeficiency virus type 1 and Moloney murine leukemia virus enzymes prefer to cleave the RNA strand one nucleotide away from the RNA-DNA junction. 2. RNA 5'-end directed cleavage 13-19 nucleotides from the RNA end. 3. DNA 3'-end directed cleavage 15-20 nucleotides away from the primer terminus.. It carries out the reaction 3'-end directed exonucleolytic cleavage of viral RNA-DNA hybrid.. The catalysed reaction is DNA(n) + a 2'-deoxyribonucleoside 5'-triphosphate = DNA(n+1) + diphosphate. Its activity is regulated as follows. The viral protease is inhibited by many synthetic protease inhibitors (PIs), such as amprenavir, atazanavir, indinavir, loprinavir, nelfinavir, ritonavir and saquinavir. RT can be inhibited either by nucleoside RT inhibitors (NRTIs) or by non nucleoside RT inhibitors (NNRTIs). NRTIs act as chain terminators, whereas NNRTIs inhibit DNA polymerization by binding a small hydrophobic pocket near the RT active site and inducing an allosteric change in this region. Classical NRTIs are abacavir, adefovir (PMEA), didanosine (ddI), lamivudine (3TC), stavudine (d4T), tenofovir (PMPA), zalcitabine (ddC), and zidovudine (AZT). Classical NNRTIs are atevirdine (BHAP U-87201E), delavirdine, efavirenz (DMP-266), emivirine (I-EBU), and nevirapine (BI-RG-587). The tritherapies used as a basic effective treatment of AIDS associate two NRTIs and one NNRTI. Use of protease inhibitors in tritherapy regimens permit more ambitious therapeutic strategies. Gag-Pol polyprotein and Gag polyprotein may regulate their own translation, by the binding genomic RNA in the 5'-UTR. At low concentration, Gag-Pol and Gag would promote translation, whereas at high concentration, the polyproteins encapsidate genomic RNA and then shut off translation. Its function is as follows. Matrix protein p17 has two main functions: in infected cell, it targets Gag and Gag-pol polyproteins to the plasma membrane via a multipartite membrane-binding signal, that includes its myristointegration complex. The myristoylation signal and the NLS exert conflicting influences its subcellular localization. The key regulation of these motifs might be phosphorylation of a portion of MA molecules on the C-terminal tyrosine at the time of virus maturation, by virion-associated cellular tyrosine kinase. Implicated in the release from host cell mediated by Vpu. In terms of biological role, capsid protein p24 forms the conical core that encapsulates the genomic RNA-nucleocapsid complex in the virion. The core is constituted by capsid protein hexamer subunits. The core is disassembled soon after virion entry. Interaction with host PPIA/CYPA protects the virus from restriction by host TRIM5-alpha and from an unknown antiviral activity in host cells. This capsid restriction by TRIM5 is one of the factors which restricts SIV to the simian species. Functionally, nucleocapsid protein p7 encapsulates and protects viral dimeric unspliced (genomic) RNA. Binds these RNAs through its zinc fingers. Facilitates rearangement of nucleic acid secondary structure during retrotranscription of genomic RNA. This capability is referred to as nucleic acid chaperone activity. The aspartyl protease mediates proteolytic cleavages of Gag and Gag-Pol polyproteins during or shortly after the release of the virion from the plasma membrane. Cleavages take place as an ordered, step-wise cascade to yield mature proteins. This process is called maturation. Displays maximal activity during the budding process just prior to particle release from the cell. Also cleaves Nef and Vif, probably concomitantly with viral structural proteins on maturation of virus particles. Hydrolyzes host EIF4GI and PABP1 in order to shut off the capped cellular mRNA translation. The resulting inhibition of cellular protein synthesis serves to ensure maximal viral gene expression and to evade host immune response. Its function is as follows. Reverse transcriptase/ribonuclease H (RT) is a multifunctional enzyme that converts the viral dimeric RNA genome into dsDNA in the cytoplasm, shortly after virus entry into the cell. This enzyme displays a DNA polymerase activity that can copy either DNA or RNA templates, and a ribonuclease H (RNase H) activity that cleaves the RNA strand of RNA-DNA heteroduplexes in a partially processive 3' to 5' endonucleasic mode. Conversion of viral genomic RNA into dsDNA requires many steps. A tRNA binds to the primer-binding site (PBS) situated at the 5'-end of the viral RNA. RT uses the 3' end of the tRNA primer to perform a short round of RNA-dependent minus-strand DNA synthesis. The reading proceeds through the U5 region and ends after the repeated (R) region which is present at both ends of viral RNA. The portion of the RNA-DNA heteroduplex is digested by the RNase H, resulting in a ssDNA product attached to the tRNA primer. This ssDNA/tRNA hybridizes with the identical R region situated at the 3' end of viral RNA. This template exchange, known as minus-strand DNA strong stop transfer, can be either intra- or intermolecular. RT uses the 3' end of this newly synthesized short ssDNA to perform the RNA-dependent minus-strand DNA synthesis of the whole template. RNase H digests the RNA template except for two polypurine tracts (PPTs) situated at the 5'-end and near the center of the genome. It is not clear if both polymerase and RNase H activities are simultaneous. RNase H can probably proceed both in a polymerase-dependent (RNA cut into small fragments by the same RT performing DNA synthesis) and a polymerase-independent mode (cleavage of remaining RNA fragments by free RTs). Secondly, RT performs DNA-directed plus-strand DNA synthesis using the PPTs that have not been removed by RNase H as primers. PPTs and tRNA primers are then removed by RNase H. The 3' and 5' ssDNA PBS regions hybridize to form a circular dsDNA intermediate. Strand displacement synthesis by RT to the PBS and PPT ends produces a blunt ended, linear dsDNA copy of the viral genome that includes long terminal repeats (LTRs) at both ends. In terms of biological role, integrase catalyzes viral DNA integration into the host chromosome, by performing a series of DNA cutting and joining reactions. This enzyme activity takes place after virion entry into a cell and reverse transcription of the RNA genome in dsDNA. The first step in the integration process is 3' processing. This step requires a complex comprising the viral genome, matrix protein, Vpr and integrase. This complex is called the pre-integration complex (PIC). The integrase protein removes 2 nucleotides from each 3' end of the viral DNA, leaving recessed CA OH's at the 3' ends. In the second step, the PIC enters cell nucleus. This process is mediated through integrase and Vpr proteins, and allows the virus to infect a non dividing cell. This ability to enter the nucleus is specific of lentiviruses, other retroviruses cannot and rely on cell division to access cell chromosomes. In the third step, termed strand transfer, the integrase protein joins the previously processed 3' ends to the 5' ends of strands of target cellular DNA at the site of integration. The 5'-ends are produced by integrase-catalyzed staggered cuts, 5 bp apart. A Y-shaped, gapped, recombination intermediate results, with the 5'-ends of the viral DNA strands and the 3' ends of target DNA strands remaining unjoined, flanking a gap of 5 bp. The last step is viral DNA integration into host chromosome. This involves host DNA repair synthesis in which the 5 bp gaps between the unjoined strands are filled in and then ligated. Since this process occurs at both cuts flanking the SIV genome, a 5 bp duplication of host DNA is produced at the ends of SIV integration. Alternatively, Integrase may catalyze the excision of viral DNA just after strand transfer, this is termed disintegration. In Simian immunodeficiency virus (isolate Mm251) (SIV-mac), this protein is Gag-Pol polyprotein (gag-pol).